The sequence spans 402 residues: Succinyl-CoA--D-citramalate CoA-transferase (402 aa).

The active-site Nucleophile is the Asp174.

This sequence belongs to the CoA-transferase III family. Homodimer.

The catalysed reaction is (3R)-citramalate + succinyl-CoA = (3R)-citramalyl-CoA + succinate. It carries out the reaction (R)-malate + succinyl-CoA = (R)-malyl-CoA + succinate. Its function is as follows. Involved in the 3-hydroxypropionate cycle used for autotrophic carbon dioxide fixation, and in the glyoxylate assimilation cycle used to regenerate acetyl-CoA and produce pyruvate as universal precursor for biosynthesis. Catalyzes the transfer of CoA moiety from succinyl-CoA to D-citramalate to yield citramalyl-CoA. The sequence is that of Succinyl-CoA--D-citramalate CoA-transferase from Chloroflexus aurantiacus (strain ATCC 29366 / DSM 635 / J-10-fl).